A 330-amino-acid chain; its full sequence is Putative pentatricopeptide repeat-containing protein At5g36300 (330 aa).

PPR repeat units lie at residues 10–44 (SLSM…GSRP), 45–75 (DPLS…VVRF), 83–113 (VRLY…KFRL), 114–148 (NSFV…GLPM), 149–179 (DVEI…LQRS), 185–215 (NIRT…IFED), 231–265 (SANL…GIEP), 266–296 (NLIM…IKET), and 302–330 (DVVT…LVTL).

It belongs to the PPR family. P subfamily.

In Arabidopsis thaliana (Mouse-ear cress), this protein is Putative pentatricopeptide repeat-containing protein At5g36300.